Consider the following 544-residue polypeptide: Inward rectifier potassium channel irk-1 (544 aa).

At 1–109 (MTLSVPDCAE…IFTTMIDVKW (109 aa)) the chain is on the cytoplasmic side. Residues 110–134 (RWMLMLFASAFVLSWSIFGTTYYLI) form a helical membrane-spanning segment. At 135 to 158 (ALVHGDLSLPTPVNHTACVMNLDS) the chain is on the extracellular side. Positions 159 to 170 (VYSSFLFAVETH) form an intramembrane region, helical; Pore-forming. An intramembrane region (pore-forming) is located at residues 171–177 (HTIGYGH). Residues 172 to 177 (TIGYGH) carry the Selectivity filter motif. Residues 178 to 186 (RYITTECYL) lie on the Extracellular side of the membrane. A helical transmembrane segment spans residues 187 to 208 (AGAIVCLQAICALLLQSFMVGI). At 209-544 (VFAKMARPKK…PIHIEIVSET (336 aa)) the chain is on the cytoplasmic side. 2 disordered regions span residues 411–448 (HKLE…NSPV) and 512–533 (LSDL…SPPV). A compositionally biased stretch (polar residues) spans 438 to 448 (NHFQSSSNSPV).

This sequence belongs to the inward rectifier-type potassium channel (TC 1.A.2.1) family. In terms of tissue distribution, expressed in neurons in the head and tail with no expression detected in non-neuronal cells in these regions. Also detected in the egg-laying system of adult hermaphordites with strong expression in the HSN motor neurons and weak expression in vulval muscles.

The protein localises to the membrane. Its subcellular location is the perikaryon. The protein resides in the cell projection. Inward rectifier potassium channels are characterized by a greater tendency to allow potassium to flow into the cell rather than out of it. Required for modulation of the activity of the hermaphrodite-specific neurons (HSNs) by the G-protein coupled neuropeptide receptor egl-6 which in turn controls egg-laying behavior. The chain is Inward rectifier potassium channel irk-1 (irk-1) from Caenorhabditis elegans.